The chain runs to 237 residues: MSGDAPTPAHDPAAEGLEASVPLESVASINSDEGQSSAQSAPLADNEARLQQLEQEHSSLREEHETLRSQYMRIAADFDNFRKRQSRDQDDLRFQLICTTLSEILPVVDNFERARQQLEPQGEEAQALHRSYQGLYKQLVDVLKQMGVASMRVVGQVFDPTLHEAVSREPSEEHPEDVVTEELQRGYHLNGRVLRHALVKVSMGPGPQSGASPSSAQPNDDSTATFQGEADPAQPGV.

Disordered regions lie at residues 1 to 52 and 200 to 237; these read MSGD…RLQQ and KVSMGPGPQSGASPSSAQPNDDSTATFQGEADPAQPGV. A compositionally biased stretch (polar residues) spans 27–40; sequence ASINSDEGQSSAQS. Positions 204–218 are enriched in low complexity; the sequence is GPGPQSGASPSSAQP.

This sequence belongs to the GrpE family. In terms of assembly, homodimer.

Its subcellular location is the cytoplasm. Its function is as follows. Participates actively in the response to hyperosmotic and heat shock by preventing the aggregation of stress-denatured proteins, in association with DnaK and GrpE. It is the nucleotide exchange factor for DnaK and may function as a thermosensor. Unfolded proteins bind initially to DnaJ; upon interaction with the DnaJ-bound protein, DnaK hydrolyzes its bound ATP, resulting in the formation of a stable complex. GrpE releases ADP from DnaK; ATP binding to DnaK triggers the release of the substrate protein, thus completing the reaction cycle. Several rounds of ATP-dependent interactions between DnaJ, DnaK and GrpE are required for fully efficient folding. The sequence is that of Protein GrpE from Prochlorococcus marinus (strain MIT 9313).